A 339-amino-acid polypeptide reads, in one-letter code: Dihydroorotase (339 aa).

Zn(2+)-binding residues include histidine 12 and histidine 14. Residues histidine 14–arginine 16 and asparagine 40 each bind substrate. Zn(2+) contacts are provided by lysine 94, histidine 133, histidine 167, and aspartate 239. At lysine 94 the chain carries N6-carboxylysine. Histidine 133 serves as a coordination point for substrate. Aspartate 239 is an active-site residue. Histidine 243 and alanine 255 together coordinate substrate.

It belongs to the metallo-dependent hydrolases superfamily. DHOase family. Class II DHOase subfamily. Homodimer. Zn(2+) serves as cofactor.

It carries out the reaction (S)-dihydroorotate + H2O = N-carbamoyl-L-aspartate + H(+). Its pathway is pyrimidine metabolism; UMP biosynthesis via de novo pathway; (S)-dihydroorotate from bicarbonate: step 3/3. Its function is as follows. Catalyzes the reversible cyclization of carbamoyl aspartate to dihydroorotate. In Helicobacter pylori (strain J99 / ATCC 700824) (Campylobacter pylori J99), this protein is Dihydroorotase.